A 468-amino-acid chain; its full sequence is Purple acid phosphatase 10 (468 aa).

Positions 1–25 (MGRVRKSDFGSIVLVLCCVLNSLLC) are cleaved as a signal peptide. 2 N-linked (GlcNAc...) asparagine glycosylation sites follow: Asn-95 and Asn-113. Asp-167 serves as a coordination point for Fe cation. Asn-175 carries N-linked (GlcNAc...) asparagine glycosylation. The Fe cation site is built by Asp-196 and Tyr-199. Asp-196 provides a ligand contact to Zn(2+). Residue Asn-233 coordinates Zn(2+). A substrate-binding site is contributed by Asn-233. Asn-306 carries N-linked (GlcNAc...) asparagine glycosylation. His-318 serves as a coordination point for Zn(2+). Catalysis depends on His-328, which acts as the Proton donor. His-355 contacts Zn(2+). 355 to 357 (HVH) contacts substrate. His-357 contacts Fe cation. The N-linked (GlcNAc...) asparagine glycan is linked to Asn-428.

Belongs to the metallophosphoesterase superfamily. Purple acid phosphatase family. As to quaternary structure, homodimer; disulfide-linked. Fe cation serves as cofactor. The cofactor is Zn(2+). Expressed in roots, stems, leaves, flowers and siliques.

It localises to the secreted. The protein resides in the cytoplasm. It carries out the reaction a phosphate monoester + H2O = an alcohol + phosphate. This is Purple acid phosphatase 10 (PAP10) from Arabidopsis thaliana (Mouse-ear cress).